The chain runs to 42 residues: LPVNEAQCRQVGGYCGLRICNFPSRFLGLCTRNHPCCSRVWV.

Cystine bridges form between Cys-8–Cys-36, Cys-15–Cys-30, and Cys-20–Cys-37.

The protein localises to the secreted. Has antibacterial activity against the Gram-positive bacterium S.aureus 1056 MRSA (MIC=11.48 ug/ml) and the Gram-negative bacterium E.coli O157:H7 (MIC=12.03 ug/ml). Does not have antifungal activity against the yeast C.albicans 3153A. This Struthio camelus (Common ostrich) protein is Ostricacin-4.